Consider the following 605-residue polypeptide: Kelch-like protein 26 (605 aa).

Positions 53-120 (LDVVLAIDNE…AYSSEVTLDL (68 aa)) constitute a BTB domain. The 102-residue stretch at 155–256 (CLNIGQMATT…RSSELVDSVQ (102 aa)) folds into the BACK domain. Kelch repeat units follow at residues 300 to 351 (SLIT…VLDN), 352 to 403 (FVYV…VLDG), 404 to 450 (QLYA…TCGD), 452 to 498 (LYIS…SANN), 499 to 549 (RIYA…LLDK), and 551 to 598 (IYIV…PIIL).

May play a role in endo(sarco)plasmic reticulum (ER/SR) mitochondrial signaling. May be part of the ubiquitin-proteasome system (UPS) and affect ubiquitination and degradation of target substrates. This is Kelch-like protein 26 (klhl26) from Danio rerio (Zebrafish).